Here is a 600-residue protein sequence, read N- to C-terminus: Glutamine--fructose-6-phosphate aminotransferase [isomerizing] (600 aa).

C2 functions as the Nucleophile; for GATase activity in the catalytic mechanism. The Glutamine amidotransferase type-2 domain maps to 2–217 (CGIVGFIGEQ…DKEIVIVMKE (216 aa)). 2 SIS domains span residues 283–422 (IRNA…AKGE) and 452–590 (LAKQ…VDKP). The For Fru-6P isomerization activity role is filled by K595.

As to quaternary structure, homodimer.

The protein resides in the cytoplasm. It catalyses the reaction D-fructose 6-phosphate + L-glutamine = D-glucosamine 6-phosphate + L-glutamate. Functionally, catalyzes the first step in hexosamine metabolism, converting fructose-6P into glucosamine-6P using glutamine as a nitrogen source. The polypeptide is Glutamine--fructose-6-phosphate aminotransferase [isomerizing] (Bacillus thuringiensis subsp. konkukian (strain 97-27)).